Consider the following 241-residue polypeptide: Methylosome subunit pICln (241 aa).

The segment at 88 to 112 (EDKEAHMADQEEEESEDDDDDEEPI) is disordered. The segment covering 97 to 112 (QEEEESEDDDDDEEPI) has biased composition (acidic residues).

Belongs to the pICln (TC 1.A.47) family. In terms of assembly, component of the methylosome, a 20S complex containing at least clns1a/picln, prmt5/skb1 and wdr77/mep50; may mediate snrpd1 and snrpd3 methylation. Forms a 6S pICln-Sm complex composed of clns1a/picln, snrpd1, snrpd2, snrpe, snrpf and snrpg; ring-like structure where clns1a/pICln mimics additional Sm proteins and which is unable to assemble into the core snRNP.

Its subcellular location is the cytoplasm. The protein resides in the cytosol. The protein localises to the nucleus. It localises to the cytoskeleton. Involved in both the assembly of spliceosomal snRNPs and the methylation of Sm proteins. Chaperone that regulates the assembly of spliceosomal U1, U2, U4 and U5 small nuclear ribonucleoproteins (snRNPs), the building blocks of the spliceosome, and thereby plays an important role in the splicing of cellular pre-mRNAs. Most spliceosomal snRNPs contain a common set of Sm proteins SNRPB, SNRPD1, SNRPD2, SNRPD3, SNRPE, SNRPF and SNRPG that assemble in a heptameric protein ring on the Sm site of the small nuclear RNA to form the core snRNP (Sm core). In the cytosol, the Sm proteins SNRPD1, SNRPD2, SNRPE, SNRPF and SNRPG are trapped in an inactive 6S pICln-Sm complex by the chaperone CLNS1A that controls the assembly of the core snRNP. Dissociation by the SMN complex of CLNS1A from the trapped Sm proteins and their transfer to an SMN-Sm complex triggers the assembly of core snRNPs and their transport to the nucleus. The polypeptide is Methylosome subunit pICln (clns1a) (Xenopus laevis (African clawed frog)).